A 283-amino-acid polypeptide reads, in one-letter code: Orotidine 5'-phosphate decarboxylase (283 aa).

Catalysis depends on Lys-97, which acts as the Proton donor.

This sequence belongs to the OMP decarboxylase family. Type 2 subfamily.

It carries out the reaction orotidine 5'-phosphate + H(+) = UMP + CO2. It functions in the pathway pyrimidine metabolism; UMP biosynthesis via de novo pathway; UMP from orotate: step 2/2. The sequence is that of Orotidine 5'-phosphate decarboxylase from Clostridium botulinum (strain Loch Maree / Type A3).